Here is a 145-residue protein sequence, read N- to C-terminus: 3-hydroxyacyl-[acyl-carrier-protein] dehydratase FabZ (145 aa).

The active site involves His-51.

This sequence belongs to the thioester dehydratase family. FabZ subfamily.

It is found in the cytoplasm. The catalysed reaction is a (3R)-hydroxyacyl-[ACP] = a (2E)-enoyl-[ACP] + H2O. Its function is as follows. Involved in unsaturated fatty acids biosynthesis. Catalyzes the dehydration of short chain beta-hydroxyacyl-ACPs and long chain saturated and unsaturated beta-hydroxyacyl-ACPs. The polypeptide is 3-hydroxyacyl-[acyl-carrier-protein] dehydratase FabZ (Staphylococcus epidermidis (strain ATCC 35984 / DSM 28319 / BCRC 17069 / CCUG 31568 / BM 3577 / RP62A)).